A 483-amino-acid polypeptide reads, in one-letter code: Regulatory protein ViaA (483 aa).

This sequence belongs to the ViaA family. In terms of assembly, homodimer. Interacts with RavA.

The protein resides in the cytoplasm. Functionally, component of the RavA-ViaA chaperone complex, which may act on the membrane to optimize the function of some of the respiratory chains. ViaA stimulates the ATPase activity of RavA. This Escherichia coli O81 (strain ED1a) protein is Regulatory protein ViaA.